The primary structure comprises 189 residues: Peptidyl-tRNA hydrolase (189 aa).

Tyr15 contacts tRNA. Residue His20 is the Proton acceptor of the active site. Residues Tyr64, Asn66, and Asn112 each contribute to the tRNA site.

Belongs to the PTH family. In terms of assembly, monomer.

The protein localises to the cytoplasm. The enzyme catalyses an N-acyl-L-alpha-aminoacyl-tRNA + H2O = an N-acyl-L-amino acid + a tRNA + H(+). Its function is as follows. Hydrolyzes ribosome-free peptidyl-tRNAs (with 1 or more amino acids incorporated), which drop off the ribosome during protein synthesis, or as a result of ribosome stalling. In terms of biological role, catalyzes the release of premature peptidyl moieties from peptidyl-tRNA molecules trapped in stalled 50S ribosomal subunits, and thus maintains levels of free tRNAs and 50S ribosomes. The polypeptide is Peptidyl-tRNA hydrolase (Sulfurihydrogenibium sp. (strain YO3AOP1)).